Consider the following 1866-residue polypeptide: MPAVEKSVITDWKRLWPMVSGIHYETPQDTVREELMNVASELQAGVLQFKPKNASSLELGTLLKEKKQEKLLPFTERLQDLLDLESAQCWEILCYYLTQEYRGSASLLTQLISTETNMAKLHEDIRHYYSLERMVVLKIVKNLIVFHQVPNHPYHREYRAVVEKITIPRLRDSYLDQLESLICEVPPRKLMAGECFHSAERLVAWSERNAREINEVLHILLVLAEHLPMGLEQIKRIFAACKQHSFGKMQSYLDDSQPYHQEIIRSLSYSELMLVLKCLDFEKPEKHSDLIEKLIEDLQVDIASMYHRPEHGPLLLAWMLLRLRGTNDADDASSLLRCRQLGKRAVDLKCFVQLHLIARHSMYADDSMLSRIVRRTIYNQVGYLCDLFDGDGSCARYEGIYELLCELVSWPHLAKDFCSREDDGPCSLYKTLLENFPLELTHLSKLALSLTKAGQGNYVKSQLEALPILALRYDESQHKLREVDTNEFELLASVQPFQQIDFTIPAGTSCTAIQHPSGCFMHFRFPVNYFDALHHEINCLLRETGHLHGDFESSERIRNVEAGLRFLESAVKLSQSISGISAEMVHPTEMCVDLLHTFKSVQYPPVGLLSSCLNVCTALLPLVDEEIFSRISNLHILPTVSPGSHYDFKMYANANGVGFESRFLGSVIDNVEKKRERYEFLLSYIGFLRAYSNLKRNRQIQMEIPGLIFLLKDVFPHLHTWHFSSQVERNKIYFEILSFICDILDLFNTAKESNCKQRELLVKVCVYSLLNLENGLILLRFVGVGNAYVQYTMELETNWMQQQPHGLMMLVRLSMRILMQLLRLKEEVYGNSETLSPLEALIYTQPKQRDTLRIIPTVCSYMSNIFDRWLPILSCRLLKRIALQFNMSLLACLDMEADQIRLTFMQKLPDELESDSIKIAILELVDACIAKQPGVTEAFFKVNYALDKRSRSFFSKDCVPNIGESIVTYMRDFLDALQVDPLTIQQALPAKIMTIFHSMWKHNLQMLVDDLVKDKQFWKKLCSPLFSELQPNLRIYTQLLNIISIEVYTGNGNNAALLDVMNKFFEQKNFGPWLNYVFNMPKVPAVKNLSSSDHLPDWICCLQAFKDLIVILLKKQPKFVTIPESQFKLMAQKCLVVLVDRSNYLEDMRPFIILAELYVFILLEFKHAYTDSLEEEQTLMDLLLQLMNRICACYEDQHVRAKEACLAIVTKCTHLYTDLLIRDSSIALRFLNSVVGIICSELQHMENSVSLEKSQGLNNSDSSDSKTSTNSLILCLNLLKAVATIFHNDGPGNWDLPFVSVRLFQRLVRCVSRTLPLFSKQVLSVQLLDVLIVFAKGHCSVEFLHCDVGEYLWLKLLPPRELLQSKHEFTKTTAADAEGWTVEQWWPVYARGIELVTIIYEKHKKCFLEDAFQFVGIHAVFLEDALLLSKQSLEPSAMYLIKAAVNLVASLTEHHKEWKQDSDLSLANLMRAVQSLLCHTSSLFHQQKNLKCLLAGRRSQLEILRSTEALIVDDELISACNDLTDIIISCVKALLRFSPDLMELLCCSAYEPSKHSILLDVKFGAPKLNEENLTLTFGIVLNLVNIYVKALNMQNHGFSEVPLNSLPNVEHSGDNDDPEVCVGNQTNRTFSKPLSNVSISTGTCPASELLSNMDGQLCLLALEHLLMLVASQAICIIRSPNLETLWKQIVRRDISNELLIFNEFVRRKVILDYKENRSPWLRRKHGLCKLKCVDPVRSSSSSSRSSEIVRRSNTNNELRVNVVRRLHLQQQQRTPPPQNFDMSSDLSPIAAAQGAAMTTSLDGRKRLYPAQQAGDAFLEDELAAIELQYFPPPTEPGYCELSQVQVVEEDYLQLMSALFNVMPHCD.

It belongs to the Nup188 family. As to quaternary structure, part of the nuclear pore complex (NPC).

It localises to the nucleus. It is found in the nuclear pore complex. Functionally, component of the nuclear pore complex (NPC), a complex required for the trafficking across the nuclear envelope. Required for proper protein transport into the nucleus. This Drosophila melanogaster (Fruit fly) protein is Nucleoporin Nup188.